We begin with the raw amino-acid sequence, 285 residues long: uncharacterized protein (285 aa).

The segment at 1–25 (MANQKKKTLPPQHQNQQPGFEYLMD) is disordered. Residue 45 to 69 (IITGGDSGIGRAVSVLFAKEGANVV) participates in NADP(+) binding. Ser-177 is a substrate binding site. Catalysis depends on Tyr-190, which acts as the Proton acceptor.

The protein belongs to the short-chain dehydrogenases/reductases (SDR) family.

This is an uncharacterized protein from Bacillus subtilis (strain 168).